A 292-amino-acid polypeptide reads, in one-letter code: Small ribosomal subunit biogenesis GTPase RsgA (292 aa).

Residues 64 to 221 (RSELFRPAVA…LVDTPGFSSL (158 aa)) enclose the CP-type G domain. Residues 113–116 (NKMD) and 164–172 (GPSGVGKST) each bind GTP. Cysteine 245, cysteine 250, histidine 252, and cysteine 258 together coordinate Zn(2+).

This sequence belongs to the TRAFAC class YlqF/YawG GTPase family. RsgA subfamily. In terms of assembly, monomer. Associates with 30S ribosomal subunit, binds 16S rRNA. It depends on Zn(2+) as a cofactor.

It localises to the cytoplasm. One of several proteins that assist in the late maturation steps of the functional core of the 30S ribosomal subunit. Helps release RbfA from mature subunits. May play a role in the assembly of ribosomal proteins into the subunit. Circularly permuted GTPase that catalyzes slow GTP hydrolysis, GTPase activity is stimulated by the 30S ribosomal subunit. The chain is Small ribosomal subunit biogenesis GTPase RsgA from Clostridium botulinum (strain Okra / Type B1).